We begin with the raw amino-acid sequence, 267 residues long: FCS-Like Zinc finger 8 (267 aa).

Disordered stretches follow at residues 1-29 and 124-156; these read MLKKRSRSKQALMAETNQSQNQKQSKTTP and DSPISSSDFGIKTRNSQPETKKPGSESGLGSPR. Polar residues-rich tracts occupy residues 15 to 28 and 126 to 141; these read ETNQSQNQKQSKTT and PISSSDFGIKTRNSQP. The FLZ-type zinc finger occupies 221–265; the sequence is SFLSCCCNCKKSLGPRDDIFMYRGDRAFCSSECRSIEMMMSEEND.

It belongs to the FLZ family. In terms of assembly, interacts with KIN10 and KIN11 via its FLZ-type zinc finger domain. Interacts with KINB1, KINB2, KINB3 and SNF4 via its N-terminal part. Interacts with HB21/ZHD3.

In terms of biological role, may act as an adapter to facilitate the interaction of SnRK1 complex with effector proteins, conferring tissue- and stimulus-type specific differences in the SnRK1 regulation pathway. In Arabidopsis thaliana (Mouse-ear cress), this protein is FCS-Like Zinc finger 8.